The following is a 470-amino-acid chain: Sulfate adenylyltransferase subunit 1 (470 aa).

Residues 22–237 enclose the tr-type G domain; the sequence is KEVLRFITCG…LEEVPVKSEE (216 aa). The G1 stretch occupies residues 31 to 38; that stretch reads GSVDDGKS. A GTP-binding site is contributed by 31–38; it reads GSVDDGKS. The G2 stretch occupies residues 89 to 93; sequence GITID. Positions 110–113 are G3; the sequence is DTPG. GTP-binding positions include 110 to 114 and 165 to 168; these read DTPGH and NKMD. The G4 stretch occupies residues 165–168; sequence NKMD. The G5 stretch occupies residues 202 to 204; that stretch reads SAK.

Belongs to the TRAFAC class translation factor GTPase superfamily. Classic translation factor GTPase family. CysN/NodQ subfamily. Heterodimer composed of CysD, the smaller subunit, and CysN.

It carries out the reaction sulfate + ATP + H(+) = adenosine 5'-phosphosulfate + diphosphate. It participates in sulfur metabolism; hydrogen sulfide biosynthesis; sulfite from sulfate: step 1/3. Its function is as follows. With CysD forms the ATP sulfurylase (ATPS) that catalyzes the adenylation of sulfate producing adenosine 5'-phosphosulfate (APS) and diphosphate, the first enzymatic step in sulfur assimilation pathway. APS synthesis involves the formation of a high-energy phosphoric-sulfuric acid anhydride bond driven by GTP hydrolysis by CysN coupled to ATP hydrolysis by CysD. This Methylorubrum populi (strain ATCC BAA-705 / NCIMB 13946 / BJ001) (Methylobacterium populi) protein is Sulfate adenylyltransferase subunit 1.